A 77-amino-acid polypeptide reads, in one-letter code: Vacuolar ATPase assembly integral membrane protein VMA21 (77 aa).

Residues 1–8 (MAVDVPTS) lie on the Cytoplasmic side of the membrane. The helical transmembrane segment at 9–29 (VIVKLMFFTLAMVSFPVLTFF) threads the bilayer. At 30–41 (VSQQYTSNTLVN) the chain is on the lumenal side. Residues 42 to 62 (GGLAALAANVVLFAYVIMAFS) form a helical membrane-spanning segment. Over 63–77 (EDVPQSDGKESKKQQ) the chain is Cytoplasmic. The Prevents secretion from ER signature appears at 74–77 (KKQQ).

It belongs to the VMA21 family.

It is found in the endoplasmic reticulum membrane. Its subcellular location is the endoplasmic reticulum-Golgi intermediate compartment membrane. The protein resides in the cytoplasmic vesicle. The protein localises to the COPII-coated vesicle membrane. Its function is as follows. Required for the assembly of the V0 complex of the vacuolar ATPase (V-ATPase) in the endoplasmic reticulum. The polypeptide is Vacuolar ATPase assembly integral membrane protein VMA21 (Eremothecium gossypii (strain ATCC 10895 / CBS 109.51 / FGSC 9923 / NRRL Y-1056) (Yeast)).